Reading from the N-terminus, the 762-residue chain is Putative cation exchanger YDL206W (762 aa).

Residues 1–26 (MHKPLRWLITIAFYVSNVILIGYSLS) form the signal peptide. Over 27–30 (SNGS) the chain is Extracellular. N-linked (GlcNAc...) asparagine glycosylation is present at N28. Residues 31-51 (ISEFYLHSVVLIECFSLLGVV) form a helical membrane-spanning segment. The Cytoplasmic segment spans residues 52–102 (TSDCLTPSLSYISSNIFHISDRVSGMTLLALGNALPDITSTYQSMKSGVTS). A helical membrane pass occupies residues 103-123 (LAIGELFGGIFFLLTVVIGLM). Over 124 to 156 (GCVATIQFQHDKSIETYTEESFDQNLSYDRSNY) the chain is Extracellular. N148 carries an N-linked (GlcNAc...) asparagine glycan. Residues 157–177 (ILDVGIFTFMLLVSGTFLADG) form a helical membrane-spanning segment. Position 178 (R178) is a topological domain, cytoplasmic. A helical transmembrane segment spans residues 179-199 (LYFWECIVMVLTYCCCAVYLI). Topologically, residues 200 to 501 (KSYKYPCEIN…YNYLTDVSLE (302 aa)) are extracellular. 2 N-linked (GlcNAc...) asparagine glycosylation sites follow: N280 and N329. The chain crosses the membrane as a helical span at residues 502-522 (IGFFEFLSLLVTTPVSIILYL). Residues 523-554 (SIPSEISQTDHDLPLSYLQNIQLIASPIILNQ) are Cytoplasmic-facing. Residues 555 to 575 (LITNNFSFWLLILSLVIAILL) form a helical membrane-spanning segment. Topologically, residues 576-589 (YFKTRTIPNKFNSD) are extracellular. A helical transmembrane segment spans residues 590–610 (IIFTVAFLLSLACLSKAVHII). Over 611–615 (VVTLT) the chain is Cytoplasmic. A helical membrane pass occupies residues 616 to 636 (HWINVFNISETILGLTIFTWG). Topologically, residues 637–650 (NSIGDLVSNITFVK) are extracellular. N645 is a glycosylation site (N-linked (GlcNAc...) asparagine). Residues 651–671 (IGVLEIAIGACFGSPLLYFLF) traverse the membrane as a helical segment. Residues 672–709 (GVGFDGIMIMLGDKTGKIVSGRDSNILMHHIDFKVDKN) are Cytoplasmic-facing. Residues 710 to 730 (LINTGVGILIAFLIFTVLIPL) form a helical membrane-spanning segment. Residues 731–738 (NDWKIDKK) are Extracellular-facing. Residues 739–759 (ISIALLTLYIVVTCISVFLEV) traverse the membrane as a helical segment. Residues 760–762 (HQV) lie on the Cytoplasmic side of the membrane.

Belongs to the Ca(2+):cation antiporter (CaCA) (TC 2.A.19) family.

It is found in the membrane. Its function is as follows. Putative cation exchanger. The polypeptide is Putative cation exchanger YDL206W (Saccharomyces cerevisiae (strain ATCC 204508 / S288c) (Baker's yeast)).